We begin with the raw amino-acid sequence, 305 residues long: Methionyl-tRNA formyltransferase (305 aa).

108 to 111 contributes to the (6S)-5,6,7,8-tetrahydrofolate binding site; sequence SLLP.

The protein belongs to the Fmt family.

The catalysed reaction is L-methionyl-tRNA(fMet) + (6R)-10-formyltetrahydrofolate = N-formyl-L-methionyl-tRNA(fMet) + (6S)-5,6,7,8-tetrahydrofolate + H(+). Its function is as follows. Attaches a formyl group to the free amino group of methionyl-tRNA(fMet). The formyl group appears to play a dual role in the initiator identity of N-formylmethionyl-tRNA by promoting its recognition by IF2 and preventing the misappropriation of this tRNA by the elongation apparatus. In Clavibacter sepedonicus (Clavibacter michiganensis subsp. sepedonicus), this protein is Methionyl-tRNA formyltransferase.